The primary structure comprises 259 residues: Major prion protein (259 aa).

An N-terminal signal peptide occupies residues 1 to 24 (MGKIQLGYWILVLFIVTWSDLGLC). The segment at 25 to 235 (KKPKPRPGGG…EYEAAAQRAY (211 aa)) is interaction with GRB2, ERI3 and SYN1. A disordered region spans residues 29–110 (PRPGGGWNSG…GYNKWKPDKP (82 aa)). Residues Gly63, Gly64, His72, Gly74, His82, Gly84, His92, and Gly94 each coordinate Cu(2+). Residues 91–101 (PHGGSNWGQGG) show a composition bias toward gly residues. The cysteines at positions 184 and 219 are disulfide-linked. Residues Asn186 and Asn202 are each glycosylated (N-linked (GlcNAc...) asparagine). Residue Asn236 is the site of GPI-anchor amidated asparagine attachment. A propeptide spans 237–259 (MAFFSAPPVTLLFLSFLIFLIVS) (removed in mature form).

This sequence belongs to the prion family. Monomer and homodimer. Has a tendency to aggregate into amyloid fibrils containing a cross-beta spine, formed by a steric zipper of superposed beta-strands. Soluble oligomers may represent an intermediate stage on the path to fibril formation. Copper binding may promote oligomerization. Interacts with GRB2, APP, ERI3/PRNPIP and SYN1. Mislocalized cytosolically exposed PrP interacts with MGRN1; this interaction alters MGRN1 subcellular location and causes lysosomal enlargement. Interacts with KIAA1191.

The protein resides in the cell membrane. It localises to the golgi apparatus. In terms of biological role, its primary physiological function is unclear. Has cytoprotective activity against internal or environmental stresses. May play a role in neuronal development and synaptic plasticity. May be required for neuronal myelin sheath maintenance. May play a role in iron uptake and iron homeostasis. Soluble oligomers are toxic to cultured neuroblastoma cells and induce apoptosis (in vitro). Association with GPC1 (via its heparan sulfate chains) targets PRNP to lipid rafts. Also provides Cu(2+) or Zn(2+) for the ascorbate-mediated GPC1 deaminase degradation of its heparan sulfate side chains. This is Major prion protein (PRNP) from Trichosurus vulpecula (Brush-tailed possum).